The following is a 244-amino-acid chain: Biosynthetic peptidoglycan transglycosylase (244 aa).

A helical membrane pass occupies residues 23–43 (LVVIGAWLAGILLFSFLPVPF).

Belongs to the glycosyltransferase 51 family.

The protein localises to the cell inner membrane. It carries out the reaction [GlcNAc-(1-&gt;4)-Mur2Ac(oyl-L-Ala-gamma-D-Glu-L-Lys-D-Ala-D-Ala)](n)-di-trans,octa-cis-undecaprenyl diphosphate + beta-D-GlcNAc-(1-&gt;4)-Mur2Ac(oyl-L-Ala-gamma-D-Glu-L-Lys-D-Ala-D-Ala)-di-trans,octa-cis-undecaprenyl diphosphate = [GlcNAc-(1-&gt;4)-Mur2Ac(oyl-L-Ala-gamma-D-Glu-L-Lys-D-Ala-D-Ala)](n+1)-di-trans,octa-cis-undecaprenyl diphosphate + di-trans,octa-cis-undecaprenyl diphosphate + H(+). It participates in cell wall biogenesis; peptidoglycan biosynthesis. Peptidoglycan polymerase that catalyzes glycan chain elongation from lipid-linked precursors. The protein is Biosynthetic peptidoglycan transglycosylase of Pectobacterium carotovorum subsp. carotovorum (strain PC1).